The sequence spans 144 residues: MSFTTCLIVMVGGALGTLARYLVSVAAMPISRFIPWGTILPINALGSFVIGFFGTLTLADGRYPVSENMRLFVMIGLCGGYTTFSSFSLQTLDLIRNDAWGRASVNVAASVILCIGAVALGHITADGFNTGAIRIAQTATEEDA.

The next 4 membrane-spanning stretches (helical) occupy residues 7 to 27 (LIVMVGGALGTLARYLVSVAA), 33 to 53 (FIPWGTILPINALGSFVIGFF), 71 to 91 (LFVMIGLCGGYTTFSSFSLQT), and 105 to 125 (VNVAASVILCIGAVALGHITA). Na(+)-binding residues include glycine 79 and threonine 82.

This sequence belongs to the fluoride channel Fluc/FEX (TC 1.A.43) family.

Its subcellular location is the cell inner membrane. It catalyses the reaction fluoride(in) = fluoride(out). Its activity is regulated as follows. Na(+) is not transported, but it plays an essential structural role and its presence is essential for fluoride channel function. In terms of biological role, fluoride-specific ion channel. Important for reducing fluoride concentration in the cell, thus reducing its toxicity. The polypeptide is Fluoride-specific ion channel FluC (Gluconobacter oxydans (strain 621H) (Gluconobacter suboxydans)).